The primary structure comprises 292 residues: Phosphatidylserine decarboxylase proenzyme (292 aa).

Catalysis depends on charge relay system; for autoendoproteolytic cleavage activity residues aspartate 89, histidine 146, and serine 252. Serine 252 serves as the catalytic Schiff-base intermediate with substrate; via pyruvic acid; for decarboxylase activity. Position 252 is a pyruvic acid (Ser); by autocatalysis (serine 252).

Belongs to the phosphatidylserine decarboxylase family. PSD-B subfamily. Prokaryotic type I sub-subfamily. In terms of assembly, heterodimer of a large membrane-associated beta subunit and a small pyruvoyl-containing alpha subunit. Pyruvate serves as cofactor. In terms of processing, is synthesized initially as an inactive proenzyme. Formation of the active enzyme involves a self-maturation process in which the active site pyruvoyl group is generated from an internal serine residue via an autocatalytic post-translational modification. Two non-identical subunits are generated from the proenzyme in this reaction, and the pyruvate is formed at the N-terminus of the alpha chain, which is derived from the carboxyl end of the proenzyme. The autoendoproteolytic cleavage occurs by a canonical serine protease mechanism, in which the side chain hydroxyl group of the serine supplies its oxygen atom to form the C-terminus of the beta chain, while the remainder of the serine residue undergoes an oxidative deamination to produce ammonia and the pyruvoyl prosthetic group on the alpha chain. During this reaction, the Ser that is part of the protease active site of the proenzyme becomes the pyruvoyl prosthetic group, which constitutes an essential element of the active site of the mature decarboxylase.

It is found in the cell membrane. It carries out the reaction a 1,2-diacyl-sn-glycero-3-phospho-L-serine + H(+) = a 1,2-diacyl-sn-glycero-3-phosphoethanolamine + CO2. Its pathway is phospholipid metabolism; phosphatidylethanolamine biosynthesis; phosphatidylethanolamine from CDP-diacylglycerol: step 2/2. Catalyzes the formation of phosphatidylethanolamine (PtdEtn) from phosphatidylserine (PtdSer). This chain is Phosphatidylserine decarboxylase proenzyme, found in Shewanella sp. (strain MR-7).